A 163-amino-acid chain; its full sequence is Inorganic pyrophosphatase (163 aa).

Substrate-binding residues include K21, R35, and Y47. Residues D57, D62, and D94 each contribute to the Mg(2+) site. Y131 is a substrate binding site.

The protein belongs to the PPase family. As to quaternary structure, homohexamer. Mg(2+) serves as cofactor.

It localises to the cytoplasm. It catalyses the reaction diphosphate + H2O = 2 phosphate + H(+). Catalyzes the hydrolysis of inorganic pyrophosphate (PPi) forming two phosphate ions. The sequence is that of Inorganic pyrophosphatase from Halalkalibacterium halodurans (strain ATCC BAA-125 / DSM 18197 / FERM 7344 / JCM 9153 / C-125) (Bacillus halodurans).